Here is a 154-residue protein sequence, read N- to C-terminus: 6,7-dimethyl-8-ribityllumazine synthase (154 aa).

5-amino-6-(D-ribitylamino)uracil-binding positions include W22, 56–58, and 80–82; these read AWE and CVI. 85 to 86 lines the (2S)-2-hydroxy-3-oxobutyl phosphate pocket; that stretch reads DT. H88 serves as the catalytic Proton donor. N113 contributes to the 5-amino-6-(D-ribitylamino)uracil binding site. R127 provides a ligand contact to (2S)-2-hydroxy-3-oxobutyl phosphate.

Belongs to the DMRL synthase family. As to quaternary structure, forms an icosahedral capsid composed of 60 subunits, arranged as a dodecamer of pentamers.

It catalyses the reaction (2S)-2-hydroxy-3-oxobutyl phosphate + 5-amino-6-(D-ribitylamino)uracil = 6,7-dimethyl-8-(1-D-ribityl)lumazine + phosphate + 2 H2O + H(+). Its pathway is cofactor biosynthesis; riboflavin biosynthesis; riboflavin from 2-hydroxy-3-oxobutyl phosphate and 5-amino-6-(D-ribitylamino)uracil: step 1/2. Catalyzes the formation of 6,7-dimethyl-8-ribityllumazine by condensation of 5-amino-6-(D-ribitylamino)uracil with 3,4-dihydroxy-2-butanone 4-phosphate. This is the penultimate step in the biosynthesis of riboflavin. The polypeptide is 6,7-dimethyl-8-ribityllumazine synthase (Xanthomonas oryzae pv. oryzae (strain MAFF 311018)).